A 446-amino-acid polypeptide reads, in one-letter code: UDP-N-acetylmuramoylalanine--D-glutamate ligase (446 aa).

115–121 provides a ligand contact to ATP; sequence GTNGKTT.

This sequence belongs to the MurCDEF family.

The protein localises to the cytoplasm. It carries out the reaction UDP-N-acetyl-alpha-D-muramoyl-L-alanine + D-glutamate + ATP = UDP-N-acetyl-alpha-D-muramoyl-L-alanyl-D-glutamate + ADP + phosphate + H(+). Its pathway is cell wall biogenesis; peptidoglycan biosynthesis. Its function is as follows. Cell wall formation. Catalyzes the addition of glutamate to the nucleotide precursor UDP-N-acetylmuramoyl-L-alanine (UMA). This Pelobacter propionicus (strain DSM 2379 / NBRC 103807 / OttBd1) protein is UDP-N-acetylmuramoylalanine--D-glutamate ligase.